The primary structure comprises 165 residues: LOB domain-containing protein 3 (165 aa).

An LOB domain is found at 13 to 115 (SPCAGCKLLR…TQLAFAQAEL (103 aa)).

It belongs to the LOB domain-containing protein family. Expressed in young shoots, roots, stems, leaves and flowers. At the bases of lateral organs formed from vegetative, inflorescence, and floral meristems.

It localises to the nucleus. This Arabidopsis thaliana (Mouse-ear cress) protein is LOB domain-containing protein 3 (LBD3).